We begin with the raw amino-acid sequence, 485 residues long: Glutamyl-tRNA(Gln) amidotransferase subunit A (485 aa).

Residues Lys-78 and Ser-153 each act as charge relay system in the active site. The active-site Acyl-ester intermediate is the Ser-177.

It belongs to the amidase family. GatA subfamily. Heterotrimer of A, B and C subunits.

It carries out the reaction L-glutamyl-tRNA(Gln) + L-glutamine + ATP + H2O = L-glutaminyl-tRNA(Gln) + L-glutamate + ADP + phosphate + H(+). Its function is as follows. Allows the formation of correctly charged Gln-tRNA(Gln) through the transamidation of misacylated Glu-tRNA(Gln) in organisms which lack glutaminyl-tRNA synthetase. The reaction takes place in the presence of glutamine and ATP through an activated gamma-phospho-Glu-tRNA(Gln). This chain is Glutamyl-tRNA(Gln) amidotransferase subunit A, found in Desulfotalea psychrophila (strain LSv54 / DSM 12343).